A 45-amino-acid polypeptide reads, in one-letter code: Large ribosomal subunit protein bL34 (45 aa).

The protein belongs to the bacterial ribosomal protein bL34 family.

The sequence is that of Large ribosomal subunit protein bL34 from Beutenbergia cavernae (strain ATCC BAA-8 / DSM 12333 / CCUG 43141 / JCM 11478 / NBRC 16432 / NCIMB 13614 / HKI 0122).